The chain runs to 81 residues: Small ribosomal subunit protein bS16 (81 aa).

This sequence belongs to the bacterial ribosomal protein bS16 family.

This chain is Small ribosomal subunit protein bS16, found in Agathobacter rectalis (strain ATCC 33656 / DSM 3377 / JCM 17463 / KCTC 5835 / VPI 0990) (Eubacterium rectale).